Here is a 428-residue protein sequence, read N- to C-terminus: Light-independent protochlorophyllide reductase subunit N (428 aa).

C16, C41, and C102 together coordinate [4Fe-4S] cluster.

It belongs to the BchN/ChlN family. Protochlorophyllide reductase is composed of three subunits; ChlL, ChlN and ChlB. Forms a heterotetramer of two ChlB and two ChlN subunits. [4Fe-4S] cluster serves as cofactor.

The catalysed reaction is chlorophyllide a + oxidized 2[4Fe-4S]-[ferredoxin] + 2 ADP + 2 phosphate = protochlorophyllide a + reduced 2[4Fe-4S]-[ferredoxin] + 2 ATP + 2 H2O. It functions in the pathway porphyrin-containing compound metabolism; chlorophyll biosynthesis (light-independent). Functionally, component of the dark-operative protochlorophyllide reductase (DPOR) that uses Mg-ATP and reduced ferredoxin to reduce ring D of protochlorophyllide (Pchlide) to form chlorophyllide a (Chlide). This reaction is light-independent. The NB-protein (ChlN-ChlB) is the catalytic component of the complex. This Synechococcus sp. (strain CC9311) protein is Light-independent protochlorophyllide reductase subunit N.